A 170-amino-acid chain; its full sequence is Ubiquitin-conjugating enzyme E2 G1 (170 aa).

Met1 carries the N-acetylmethionine modification. Residue Thr2 is modified to N-acetylthreonine; in Ubiquitin-conjugating enzyme E2 G1, N-terminally processed. The UBC core domain maps to 5–166 (QSALLLRRQL…VARCVRKSQE (162 aa)). Residue Cys90 is the Glycyl thioester intermediate of the active site.

The protein belongs to the ubiquitin-conjugating enzyme family. Post-translationally, autoubiquitinated.

It catalyses the reaction S-ubiquitinyl-[E1 ubiquitin-activating enzyme]-L-cysteine + [E2 ubiquitin-conjugating enzyme]-L-cysteine = [E1 ubiquitin-activating enzyme]-L-cysteine + S-ubiquitinyl-[E2 ubiquitin-conjugating enzyme]-L-cysteine.. It functions in the pathway protein modification; protein ubiquitination. Functionally, accepts ubiquitin from the E1 complex and catalyzes its covalent attachment to other proteins. In vitro catalyzes 'Lys-48'-, as well as 'Lys-63'-linked polyubiquitination. May be involved in degradation of muscle-specific proteins. Mediates polyubiquitination of CYP3A4. This Macaca fascicularis (Crab-eating macaque) protein is Ubiquitin-conjugating enzyme E2 G1 (UBE2G1).